The chain runs to 146 residues: Anti-sigma F factor (146 aa).

This sequence belongs to the anti-sigma-factor family.

It carries out the reaction L-seryl-[protein] + ATP = O-phospho-L-seryl-[protein] + ADP + H(+). The enzyme catalyses L-threonyl-[protein] + ATP = O-phospho-L-threonyl-[protein] + ADP + H(+). Its function is as follows. Binds to sigma F and blocks its ability to form an RNA polymerase holoenzyme (E-sigma F). Phosphorylates SpoIIAA on a serine residue. This phosphorylation may enable SpoIIAA to act as an anti-anti-sigma factor that counteracts SpoIIAB and thus releases sigma F from inhibition. The polypeptide is Anti-sigma F factor (Bacillus licheniformis (strain ATCC 14580 / DSM 13 / JCM 2505 / CCUG 7422 / NBRC 12200 / NCIMB 9375 / NCTC 10341 / NRRL NRS-1264 / Gibson 46)).